The primary structure comprises 281 residues: Glutamate racemase (281 aa).

Residues 10 to 11 and 42 to 43 each bind substrate; these read DS and YG. C74 functions as the Proton donor/acceptor in the catalytic mechanism. 75–76 is a binding site for substrate; sequence NT. The active-site Proton donor/acceptor is the C190. Position 191 to 192 (191 to 192) interacts with substrate; it reads TH.

This sequence belongs to the aspartate/glutamate racemases family.

The catalysed reaction is L-glutamate = D-glutamate. It functions in the pathway cell wall biogenesis; peptidoglycan biosynthesis. In terms of biological role, provides the (R)-glutamate required for cell wall biosynthesis. This Oenococcus oeni (strain ATCC BAA-331 / PSU-1) protein is Glutamate racemase.